Reading from the N-terminus, the 451-residue chain is Serine--tRNA ligase, cytoplasmic (451 aa).

236–238 (TSE) contacts L-serine. Residues 267-269 (RKE) and valine 283 each bind ATP. Glutamate 290 contacts L-serine. 354 to 357 (ELVS) contributes to the ATP binding site. Position 392 (threonine 392) interacts with L-serine.

Belongs to the class-II aminoacyl-tRNA synthetase family. Type-1 seryl-tRNA synthetase subfamily. In terms of assembly, homodimer. The tRNA molecule binds across the dimer.

Its subcellular location is the cytoplasm. The catalysed reaction is tRNA(Ser) + L-serine + ATP = L-seryl-tRNA(Ser) + AMP + diphosphate + H(+). The enzyme catalyses tRNA(Sec) + L-serine + ATP = L-seryl-tRNA(Sec) + AMP + diphosphate + H(+). Its pathway is aminoacyl-tRNA biosynthesis; selenocysteinyl-tRNA(Sec) biosynthesis; L-seryl-tRNA(Sec) from L-serine and tRNA(Sec): step 1/1. In terms of biological role, catalyzes the attachment of serine to tRNA(Ser). Is also able to aminoacylate tRNA(Sec) with serine, to form the misacylated tRNA L-seryl-tRNA(Sec), which will be further converted into selenocysteinyl-tRNA(Sec). This chain is Serine--tRNA ligase, cytoplasmic (serS), found in Dictyostelium discoideum (Social amoeba).